The chain runs to 461 residues: Bifunctional protein HldE (461 aa).

The interval Met-1–Thr-311 is ribokinase. ATP is bound at residue Asn-191–Glu-194. Asp-260 is a catalytic residue. The tract at residues Phe-332 to Asp-461 is cytidylyltransferase.

The protein in the N-terminal section; belongs to the carbohydrate kinase PfkB family. It in the C-terminal section; belongs to the cytidylyltransferase family. As to quaternary structure, homodimer.

It carries out the reaction D-glycero-beta-D-manno-heptose 7-phosphate + ATP = D-glycero-beta-D-manno-heptose 1,7-bisphosphate + ADP + H(+). The catalysed reaction is D-glycero-beta-D-manno-heptose 1-phosphate + ATP + H(+) = ADP-D-glycero-beta-D-manno-heptose + diphosphate. It participates in nucleotide-sugar biosynthesis; ADP-L-glycero-beta-D-manno-heptose biosynthesis; ADP-L-glycero-beta-D-manno-heptose from D-glycero-beta-D-manno-heptose 7-phosphate: step 1/4. Its pathway is nucleotide-sugar biosynthesis; ADP-L-glycero-beta-D-manno-heptose biosynthesis; ADP-L-glycero-beta-D-manno-heptose from D-glycero-beta-D-manno-heptose 7-phosphate: step 3/4. Catalyzes the phosphorylation of D-glycero-D-manno-heptose 7-phosphate at the C-1 position to selectively form D-glycero-beta-D-manno-heptose-1,7-bisphosphate. Its function is as follows. Catalyzes the ADP transfer from ATP to D-glycero-beta-D-manno-heptose 1-phosphate, yielding ADP-D-glycero-beta-D-manno-heptose. The chain is Bifunctional protein HldE from Helicobacter pylori (strain P12).